Reading from the N-terminus, the 124-residue chain is Large ribosomal subunit protein bL12 (124 aa).

A compositionally biased stretch (basic and acidic residues) spans 102–116 (MSKEDAEAAKTKLEE). The interval 102–124 (MSKEDAEAAKTKLEEAGASVELK) is disordered.

This sequence belongs to the bacterial ribosomal protein bL12 family. Homodimer. Part of the ribosomal stalk of the 50S ribosomal subunit. Forms a multimeric L10(L12)X complex, where L10 forms an elongated spine to which 2 to 4 L12 dimers bind in a sequential fashion. Binds GTP-bound translation factors.

Its function is as follows. Forms part of the ribosomal stalk which helps the ribosome interact with GTP-bound translation factors. Is thus essential for accurate translation. In Chromohalobacter salexigens (strain ATCC BAA-138 / DSM 3043 / CIP 106854 / NCIMB 13768 / 1H11), this protein is Large ribosomal subunit protein bL12.